A 358-amino-acid polypeptide reads, in one-letter code: Heme A synthase (358 aa).

A run of 8 helical transmembrane segments spans residues 22-42 (IQVW…VGGA), 107-127 (VLGR…WVTK), 133-153 (IFLQ…IGWW), 172-192 (LAIH…LSRG), 208-228 (FAGW…LVAG), 269-289 (FVHR…ALYV), 302-322 (AIFL…TLLH), and 324-344 (VPIS…CFSV). Residue His271 coordinates heme. His332 is a binding site for heme.

This sequence belongs to the COX15/CtaA family. Type 2 subfamily. In terms of assembly, interacts with CtaB. The cofactor is heme b.

The protein resides in the cell membrane. It carries out the reaction Fe(II)-heme o + 2 A + H2O = Fe(II)-heme a + 2 AH2. It participates in porphyrin-containing compound metabolism; heme A biosynthesis; heme A from heme O: step 1/1. Functionally, catalyzes the conversion of heme O to heme A by two successive hydroxylations of the methyl group at C8. The first hydroxylation forms heme I, the second hydroxylation results in an unstable dihydroxymethyl group, which spontaneously dehydrates, resulting in the formyl group of heme A. This Bartonella bacilliformis (strain ATCC 35685 / KC583 / Herrer 020/F12,63) protein is Heme A synthase.